A 210-amino-acid chain; its full sequence is Superoxide dismutase [Mn], mitochondrial (210 aa).

Positions 30, 78, 166, and 170 each coordinate Mn(2+).

It belongs to the iron/manganese superoxide dismutase family. In terms of assembly, homotetramer. It depends on Mn(2+) as a cofactor. The N-terminus is blocked.

Its subcellular location is the mitochondrion matrix. It catalyses the reaction 2 superoxide + 2 H(+) = H2O2 + O2. Its function is as follows. Destroys superoxide anion radicals which are normally produced within the cells and which are toxic to biological systems. This is Superoxide dismutase [Mn], mitochondrial (SOD) from Penicillium chrysogenum (Penicillium notatum).